We begin with the raw amino-acid sequence, 832 residues long: Vacuolar transmembrane transporter penV (832 aa).

2 helical membrane-spanning segments follow: residues 39–59 (LYTQ…AFCI) and 117–137 (FFKF…AIIL). The disordered stretch occupies residues 152 to 171 (WDNPPGNKTTSPIDGSEKEK). Residue Asn158 is glycosylated (N-linked (GlcNAc...) asparagine). A helical membrane pass occupies residues 178-198 (YLWIYVLFAYVFSGLAIYMLL). N-linked (GlcNAc...) asparagine glycosylation is present at Asn214. A disordered region spans residues 291 to 322 (NDGNALPLTEQQPRDADDERSGLLSGHDNEHV). The segment covering 302 to 321 (QPRDADDERSGLLSGHDNEH) has biased composition (basic and acidic residues). 9 helical membrane-spanning segments follow: residues 434–454 (FVIG…ASLL), 483–503 (GLPT…YEWL), 524–544 (FFFS…ASGF), 560–582 (TIAL…LLIL), 587–608 (LFPF…FLSA), 623–645 (FSYG…YSVF), 650–672 (LICL…QLLY), 687–707 (MICN…IGVL), and 713–733 (ITRS…SYWF). Residues 754–777 (PGGGDISPSPSSTLSPPSGLDRDS) form a disordered region. A compositionally biased stretch (low complexity) spans 759-771 (ISPSPSSTLSPPS).

Belongs to the CSC1 (TC 1.A.17) family.

It is found in the vacuole membrane. Its function is as follows. Vacuolar transmembrane transporter that participates in the first stage of the beta-lactam biosynthesis (the formation of the ACV tripeptide), probably taking part in the supply of amino acids from the vacuolar lumen to the vacuole-anchored ACV synthetase. This chain is Vacuolar transmembrane transporter penV, found in Penicillium rubens (strain ATCC 28089 / DSM 1075 / NRRL 1951 / Wisconsin 54-1255) (Penicillium chrysogenum).